Consider the following 434-residue polypeptide: Pyrichalasin H cluster regulator BC2 (434 aa).

2 disordered regions span residues 297–321 (GSSPSGTPESELTSPHKRATTCSPL) and 362–383 (HPGHEDHQQQQEEVKQHDRLSH). The segment covering 298 to 309 (SSPSGTPESELT) has biased composition (polar residues). A compositionally biased stretch (basic and acidic residues) spans 362 to 380 (HPGHEDHQQQQEEVKQHDR).

It localises to the nucleus. Functionally, transcription factor probably involved in regulation of gene cluster that mediates the biosynthesis of a tyrosine-derived cytochalasan acting as a fungal signal recognized by resistant rice plants and leads to avirulence in Pi33 resistant rice cultivars. The sequence is that of Pyrichalasin H cluster regulator BC2 from Pyricularia oryzae (strain 70-15 / ATCC MYA-4617 / FGSC 8958) (Rice blast fungus).